The primary structure comprises 648 residues: Copper methylamine oxidase (648 aa).

Residues 1–9 constitute a propeptide that is removed on maturation; the sequence is MTLNAESEA. Residue 299-310 participates in substrate binding; sequence AFDSGEYNIGNM. The Proton acceptor role is filled by aspartate 301. A disulfide bond links cysteine 320 and cysteine 346. 382-387 contacts substrate; the sequence is VANYEY. Catalysis depends on tyrosine 385, which acts as the Schiff-base intermediate with substrate; via topaquinone. Tyrosine 385 carries the post-translational modification 2',4',5'-topaquinone. Residues histidine 436 and histidine 438 each coordinate Cu cation. Residues aspartate 445, phenylalanine 446, and aspartate 584 each contribute to the Mn(2+) site. Cu cation is bound at residue histidine 595. The disordered stretch occupies residues 629-648; it reads PTSTSTTQTGEADTCCHTDK.

It belongs to the copper/topaquinone oxidase family. Homodimer. The cofactor is Cu cation. Zn(2+) is required as a cofactor. L-topaquinone serves as cofactor. Requires Mn(2+) as cofactor. Topaquinone (TPQ) is generated by copper-dependent autoxidation of a specific tyrosyl residue.

It carries out the reaction a primary methyl amine + O2 + H2O = an aldehyde + H2O2 + NH4(+). In Arthrobacter sp. (strain P1), this protein is Copper methylamine oxidase (maoII).